The primary structure comprises 608 residues: Actin-related protein 8 (608 aa).

Positions 1–20 are disordered; that stretch reads MQRSRASSTSSGRLQASQQV. 272–275 is an ATP binding site; it reads DIGA.

It belongs to the actin family. ARP8 subfamily. Component of the chromatin remodeling Ino80 complex. Exists as monomers and dimers, but the dimer is most probably the biologically relevant form required for stable interactions with histones that exploits the twofold symmetry of the nucleosome core.

It is found in the nucleus. Its function is as follows. Plays an important role in the functional organization of mitotic chromosomes. Exhibits low basal ATPase activity, and unable to polymerize. Proposed core component of the chromatin remodeling INO80 complex which is involved in transcriptional regulation, DNA replication and probably DNA repair. Strongly prefer nucleosomes and H3-H4 tetramers over H2A-H2B dimers, suggesting it may act as a nucleosome recognition module within the complex. The sequence is that of Actin-related protein 8 from Drosophila pseudoobscura pseudoobscura (Fruit fly).